Consider the following 295-residue polypeptide: Bifunctional protein FolD (295 aa).

Residues 164–166, Ser193, and Ile234 each bind NADP(+); that span reads GRS.

This sequence belongs to the tetrahydrofolate dehydrogenase/cyclohydrolase family. In terms of assembly, homodimer.

It carries out the reaction (6R)-5,10-methylene-5,6,7,8-tetrahydrofolate + NADP(+) = (6R)-5,10-methenyltetrahydrofolate + NADPH. It catalyses the reaction (6R)-5,10-methenyltetrahydrofolate + H2O = (6R)-10-formyltetrahydrofolate + H(+). Its pathway is one-carbon metabolism; tetrahydrofolate interconversion. Functionally, catalyzes the oxidation of 5,10-methylenetetrahydrofolate to 5,10-methenyltetrahydrofolate and then the hydrolysis of 5,10-methenyltetrahydrofolate to 10-formyltetrahydrofolate. This chain is Bifunctional protein FolD, found in Flavobacterium johnsoniae (strain ATCC 17061 / DSM 2064 / JCM 8514 / BCRC 14874 / CCUG 350202 / NBRC 14942 / NCIMB 11054 / UW101) (Cytophaga johnsonae).